The sequence spans 104 residues: MEQDKIRIKLKSYDYKLLDQSVKQIVETVKRTGSSVKGPIPLPTSRRRWVVLRSPHKFDQSREHFEIREFKRMLDIVKITPQTIESLMEISLPAGVDIEVKMRG.

This sequence belongs to the universal ribosomal protein uS10 family. Part of the 30S ribosomal subunit.

In terms of biological role, involved in the binding of tRNA to the ribosomes. This chain is Small ribosomal subunit protein uS10, found in Hydrogenobaculum sp. (strain Y04AAS1).